The primary structure comprises 356 residues: Phospho-N-acetylmuramoyl-pentapeptide-transferase (356 aa).

The next 10 membrane-spanning stretches (helical) occupy residues 25-45 (TIAAMLTSGLIVFLFGPSIIA), 70-90 (GTPTMGGLMILTGIVVSAFLW), 93-113 (LSNIYFWVSLLVMLSFGAIGF), 138-158 (FFVAAIAAFIILQIGSSGFAL), 164-184 (YLIHLGWFFIPFSAFVIVATG), 195-215 (GLAIVPVMVAALSFALIAYLC), 235-255 (LAVLLGAVVGAGLGFLWFNAP), 258-278 (AIFMGDTGSLALGGLLGTVAV), 284-304 (IVLVLIGGLFVVEAFSVVIQV), and 333-353 (QVVIRFWIISIVLALIGLSTL).

The protein belongs to the glycosyltransferase 4 family. MraY subfamily. The cofactor is Mg(2+).

It is found in the cell inner membrane. The enzyme catalyses UDP-N-acetyl-alpha-D-muramoyl-L-alanyl-gamma-D-glutamyl-meso-2,6-diaminopimeloyl-D-alanyl-D-alanine + di-trans,octa-cis-undecaprenyl phosphate = di-trans,octa-cis-undecaprenyl diphospho-N-acetyl-alpha-D-muramoyl-L-alanyl-D-glutamyl-meso-2,6-diaminopimeloyl-D-alanyl-D-alanine + UMP. The protein operates within cell wall biogenesis; peptidoglycan biosynthesis. Functionally, catalyzes the initial step of the lipid cycle reactions in the biosynthesis of the cell wall peptidoglycan: transfers peptidoglycan precursor phospho-MurNAc-pentapeptide from UDP-MurNAc-pentapeptide onto the lipid carrier undecaprenyl phosphate, yielding undecaprenyl-pyrophosphoryl-MurNAc-pentapeptide, known as lipid I. The protein is Phospho-N-acetylmuramoyl-pentapeptide-transferase of Bartonella tribocorum (strain CIP 105476 / IBS 506).